We begin with the raw amino-acid sequence, 137 residues long: Ribosomal RNA large subunit methyltransferase H (137 aa).

S-adenosyl-L-methionine is bound by residues L56, G85, and L104–F109.

The protein belongs to the RNA methyltransferase RlmH family. In terms of assembly, homodimer.

The protein resides in the cytoplasm. It catalyses the reaction pseudouridine(1915) in 23S rRNA + S-adenosyl-L-methionine = N(3)-methylpseudouridine(1915) in 23S rRNA + S-adenosyl-L-homocysteine + H(+). In terms of biological role, specifically methylates the pseudouridine at position 1915 (m3Psi1915) in 23S rRNA. This Prochlorococcus marinus (strain MIT 9515) protein is Ribosomal RNA large subunit methyltransferase H.